The chain runs to 245 residues: 5-oxoprolinase subunit A (245 aa).

It belongs to the LamB/PxpA family. As to quaternary structure, forms a complex composed of PxpA, PxpB and PxpC.

The catalysed reaction is 5-oxo-L-proline + ATP + 2 H2O = L-glutamate + ADP + phosphate + H(+). Catalyzes the cleavage of 5-oxoproline to form L-glutamate coupled to the hydrolysis of ATP to ADP and inorganic phosphate. In Serratia proteamaculans (strain 568), this protein is 5-oxoprolinase subunit A.